Consider the following 146-residue polypeptide: D-aminoacyl-tRNA deacylase (146 aa).

The Gly-cisPro motif, important for rejection of L-amino acids motif lies at 138-139 (GP).

Belongs to the DTD family. Homodimer.

The protein resides in the cytoplasm. The catalysed reaction is glycyl-tRNA(Ala) + H2O = tRNA(Ala) + glycine + H(+). The enzyme catalyses a D-aminoacyl-tRNA + H2O = a tRNA + a D-alpha-amino acid + H(+). In terms of biological role, an aminoacyl-tRNA editing enzyme that deacylates mischarged D-aminoacyl-tRNAs. Also deacylates mischarged glycyl-tRNA(Ala), protecting cells against glycine mischarging by AlaRS. Acts via tRNA-based rather than protein-based catalysis; rejects L-amino acids rather than detecting D-amino acids in the active site. By recycling D-aminoacyl-tRNA to D-amino acids and free tRNA molecules, this enzyme counteracts the toxicity associated with the formation of D-aminoacyl-tRNA entities in vivo and helps enforce protein L-homochirality. This chain is D-aminoacyl-tRNA deacylase, found in Stenotrophomonas maltophilia (strain R551-3).